A 538-amino-acid polypeptide reads, in one-letter code: Acetylcholine receptor subunit alpha-type acr-7 (538 aa).

The first 27 residues, 1-27, serve as a signal peptide directing secretion; the sequence is MMVQSIQIVLPVALFFLIVFNGFTVEG. Residues 28–250 are Extracellular-facing; the sequence is SKKEAQLYRD…LHLRRRTFYY (223 aa). Residues Asn41 and Asn101 are each glycosylated (N-linked (GlcNAc...) asparagine). Disulfide bonds link Cys160/Cys174 and Cys229/Cys230. The next 3 helical transmembrane spans lie at 251–271, 280–300, and 313–333; these read VFNVVLPTLLVSFMSLLAFCL, IGLQTTILLSVCFFLTILSEM, and VFFSALTFIVAMSTTFTILVL. The Cytoplasmic portion of the chain corresponds to 334–513; sequence NIRYRQITNH…FAAQAVDRFC (180 aa). The helical transmembrane segment at 514–534 threads the bilayer; it reads LIIFTIVFIICCFIFVAIPPI.

This sequence belongs to the ligand-gated ion channel (TC 1.A.9) family. Acetylcholine receptor (TC 1.A.9.1) subfamily. In terms of assembly, forms a homooligomeric channel blocked by alpha-bungarotoxin. The structure is probably pentameric.

Its subcellular location is the postsynaptic cell membrane. The protein localises to the cell membrane. Its function is as follows. After binding acetylcholine, the AChR responds by an extensive change in conformation that affects all subunits and leads to opening of an ion-conducting channel across the plasma membrane. The chain is Acetylcholine receptor subunit alpha-type acr-7 (acr-7) from Caenorhabditis elegans.